The following is a 141-amino-acid chain: Large ribosomal subunit protein uL11c (141 aa).

The protein belongs to the universal ribosomal protein uL11 family. As to quaternary structure, part of the ribosomal stalk of the 50S ribosomal subunit. Interacts with L10 and the large rRNA to form the base of the stalk. L10 forms an elongated spine to which L12 dimers bind in a sequential fashion forming a multimeric L10(L12)X complex.

The protein localises to the plastid. It localises to the chloroplast. Forms part of the ribosomal stalk which helps the ribosome interact with GTP-bound translation factors. The polypeptide is Large ribosomal subunit protein uL11c (Trieres chinensis (Marine centric diatom)).